The chain runs to 392 residues: L-rhamnonate dehydratase (392 aa).

Positions 22 and 48 each coordinate substrate. 3 residues coordinate Mg(2+): D214, E240, and E268. H318 functions as the Proton acceptor in the catalytic mechanism. Substrate is bound at residue E338.

It belongs to the mandelate racemase/muconate lactonizing enzyme family. RhamD subfamily. As to quaternary structure, homooctamer; tetramer of dimers. Requires Mg(2+) as cofactor.

It carries out the reaction L-rhamnonate = 2-dehydro-3-deoxy-L-rhamnonate + H2O. Its function is as follows. Catalyzes the dehydration of L-rhamnonate to 2-keto-3-deoxy-L-rhamnonate (KDR). In Paraburkholderia phytofirmans (strain DSM 17436 / LMG 22146 / PsJN) (Burkholderia phytofirmans), this protein is L-rhamnonate dehydratase.